We begin with the raw amino-acid sequence, 77 residues long: U8-lycotoxin-Ls1l (77 aa).

A signal peptide spans 1-20; the sequence is MKLMIFTGLVLFAIVSLIEA. Positions 21 to 26 are excised as a propeptide; the sequence is QAENEK.

Belongs to the neurotoxin 19 (CSTX) family. 08 (U8-Lctx) subfamily. Post-translationally, contains 4 disulfide bonds. Expressed by the venom gland.

It localises to the secreted. The chain is U8-lycotoxin-Ls1l from Lycosa singoriensis (Wolf spider).